We begin with the raw amino-acid sequence, 155 residues long: Ribosomal RNA large subunit methyltransferase H (155 aa).

S-adenosyl-L-methionine contacts are provided by residues L72, G104, and 123–128; that span reads LAKITL.

The protein belongs to the RNA methyltransferase RlmH family. As to quaternary structure, homodimer.

It is found in the cytoplasm. It carries out the reaction pseudouridine(1915) in 23S rRNA + S-adenosyl-L-methionine = N(3)-methylpseudouridine(1915) in 23S rRNA + S-adenosyl-L-homocysteine + H(+). Specifically methylates the pseudouridine at position 1915 (m3Psi1915) in 23S rRNA. The chain is Ribosomal RNA large subunit methyltransferase H from Mycoplasma capricolum subsp. capricolum (strain California kid / ATCC 27343 / NCTC 10154).